A 388-amino-acid chain; its full sequence is DNA replication and repair protein RecF (388 aa).

Residue 30–37 participates in ATP binding; that stretch reads GNNAQGKS.

It belongs to the RecF family.

It localises to the cytoplasm. Functionally, the RecF protein is involved in DNA metabolism; it is required for DNA replication and normal SOS inducibility. RecF binds preferentially to single-stranded, linear DNA. It also seems to bind ATP. This Picosynechococcus sp. (strain ATCC 27264 / PCC 7002 / PR-6) (Agmenellum quadruplicatum) protein is DNA replication and repair protein RecF.